Reading from the N-terminus, the 37-residue chain is MIFYPTESLILGLFIMAASLLFAYFQNDLDSYYFKRK.

Residues 1–22 form the signal peptide; it reads MIFYPTESLILGLFIMAASLLF.

In terms of biological role, proteins A1 and A2-A3 are necessary for completion of phage DNA transfer. A1 is also required for the shut-off of expression of pre-early genes. This Escherichia coli (Enterobacteria phage BF23) protein is Probable protein A1 (A1).